The chain runs to 239 residues: Uridylate kinase (239 aa).

Position 12–15 (12–15 (KLSG)) interacts with ATP. The tract at residues 20–25 (GEKGFG) is involved in allosteric activation by GTP. Residue glycine 54 participates in UMP binding. Glycine 55 and arginine 59 together coordinate ATP. Residues aspartate 72 and 133-140 (TGNPFFST) each bind UMP. The ATP site is built by tyrosine 166 and aspartate 169.

This sequence belongs to the UMP kinase family. In terms of assembly, homohexamer.

It is found in the cytoplasm. It carries out the reaction UMP + ATP = UDP + ADP. It participates in pyrimidine metabolism; CTP biosynthesis via de novo pathway; UDP from UMP (UMPK route): step 1/1. With respect to regulation, allosterically activated by GTP. Inhibited by UTP. Its function is as follows. Catalyzes the reversible phosphorylation of UMP to UDP. The protein is Uridylate kinase of Caldicellulosiruptor saccharolyticus (strain ATCC 43494 / DSM 8903 / Tp8T 6331).